Reading from the N-terminus, the 175-residue chain is B9 domain-containing protein 2 (175 aa).

Residues 2-118 form the C2 B9-type domain; the sequence is AEVHVIGQII…ACPTWRPLGS (117 aa).

It belongs to the B9D family. In terms of assembly, part of the tectonic-like complex (also named B9 complex). Interacts with TUBG1.

The protein resides in the cytoplasm. The protein localises to the cytoskeleton. Its subcellular location is the cilium basal body. It localises to the cilium axoneme. It is found in the nucleus. Functionally, component of the tectonic-like complex, a complex localized at the transition zone of primary cilia and acting as a barrier that prevents diffusion of transmembrane proteins between the cilia and plasma membranes. This chain is B9 domain-containing protein 2 (B9D2), found in Homo sapiens (Human).